The following is a 293-amino-acid chain: 4-hydroxy-tetrahydrodipicolinate synthase (293 aa).

Thr-44 lines the pyruvate pocket. The Proton donor/acceptor role is filled by Tyr-132. The Schiff-base intermediate with substrate role is filled by Lys-161. Ile-205 provides a ligand contact to pyruvate.

The protein belongs to the DapA family. As to quaternary structure, homotetramer; dimer of dimers.

It is found in the cytoplasm. The enzyme catalyses L-aspartate 4-semialdehyde + pyruvate = (2S,4S)-4-hydroxy-2,3,4,5-tetrahydrodipicolinate + H2O + H(+). It functions in the pathway amino-acid biosynthesis; L-lysine biosynthesis via DAP pathway; (S)-tetrahydrodipicolinate from L-aspartate: step 3/4. Its function is as follows. Catalyzes the condensation of (S)-aspartate-beta-semialdehyde [(S)-ASA] and pyruvate to 4-hydroxy-tetrahydrodipicolinate (HTPA). The sequence is that of 4-hydroxy-tetrahydrodipicolinate synthase from Thermosipho africanus (strain TCF52B).